Consider the following 404-residue polypeptide: NADH-quinone oxidoreductase subunit D 1 (404 aa).

This sequence belongs to the complex I 49 kDa subunit family. NDH-1 is composed of 14 different subunits. Subunits NuoB, C, D, E, F, and G constitute the peripheral sector of the complex.

Its subcellular location is the cell inner membrane. The catalysed reaction is a quinone + NADH + 5 H(+)(in) = a quinol + NAD(+) + 4 H(+)(out). Its function is as follows. NDH-1 shuttles electrons from NADH, via FMN and iron-sulfur (Fe-S) centers, to quinones in the respiratory chain. The immediate electron acceptor for the enzyme in this species is believed to be ubiquinone. Couples the redox reaction to proton translocation (for every two electrons transferred, four hydrogen ions are translocated across the cytoplasmic membrane), and thus conserves the redox energy in a proton gradient. The sequence is that of NADH-quinone oxidoreductase subunit D 1 from Sorangium cellulosum (strain So ce56) (Polyangium cellulosum (strain So ce56)).